A 279-amino-acid polypeptide reads, in one-letter code: Zinc finger AN1 and C2H2 domain-containing stress-associated protein 11 (279 aa).

AN1-type zinc fingers lie at residues 7–55 (PDLG…REDV) and 95–145 (ATKK…KLPF). Residues Cys13, Cys18, Cys28, Cys31, Cys36, His39, His45, Cys47, Cys101, Cys106, Cys118, Cys121, Cys126, His129, His135, and Cys137 each contribute to the Zn(2+) site. The tract at residues 152 to 178 (STTRKEAKTTRPNKAHPSTSSSSSSSR) is disordered. Over residues 169–178 (STSSSSSSSR) the composition is skewed to low complexity. 2 C2H2-type zinc fingers span residues 213–236 (EVCP…EKTH) and 250–273 (DVCP…ERDH).

Functionally, may be involved in environmental stress response. This is Zinc finger AN1 and C2H2 domain-containing stress-associated protein 11 (SAP11) from Arabidopsis thaliana (Mouse-ear cress).